The primary structure comprises 92 residues: Small ribosomal subunit protein uS19 (92 aa).

Belongs to the universal ribosomal protein uS19 family.

Functionally, protein S19 forms a complex with S13 that binds strongly to the 16S ribosomal RNA. The sequence is that of Small ribosomal subunit protein uS19 from Bartonella henselae (strain ATCC 49882 / DSM 28221 / CCUG 30454 / Houston 1) (Rochalimaea henselae).